Consider the following 537-residue polypeptide: Leucine-rich repeat LGI family member 4 (537 aa).

Residues 1–19 form the signal peptide; the sequence is MGGAGILLLLLAGAGVVVA. LRR repeat units lie at residues 53 to 74, 77 to 98, 101 to 122, and 125 to 146; these read TLLSLSLVRTGVTQLKAGSFLR, SLHLLLFTSNSFSVIEDDAFAG, HLQYLFIEDNEIGSISKNALRG, and SLTHLSLANNHLETLPRFLFRG. Positions 158 to 208 constitute an LRRCT domain; that stretch reads NPFQCDCRVLWLLQWMPTVNASVGTGACAGPASLSHMQLHHLDPKTFKCRA. Residue Asn-177 is glycosylated (N-linked (GlcNAc...) asparagine). EAR repeat units lie at residues 210 to 252, 256 to 298, 302 to 349, 351 to 394, 396 to 439, 441 to 483, and 487 to 532; these read ELSW…SWDY, RFRP…ARPS, RLAP…CRDG, GFYP…HWTG, RFER…RWDG, MFRL…RLEP, and LLEP…QHHE.

Can bind to ADAM11, ADAM22 and ADAM23. Widely expressed, with highest expression in brain.

The protein resides in the secreted. Functionally, component of Schwann cell signaling pathway(s) that controls axon segregation and myelin formation. This chain is Leucine-rich repeat LGI family member 4 (LGI4), found in Homo sapiens (Human).